Here is a 323-residue protein sequence, read N- to C-terminus: MNKILFYLFVYGVVNSAAYDLLKAPNYFEEFVHRFNKDYGSEVEKLRRFKIFQHNLNEIIIKNQNDSAKYEINKFSDLSKDETIAKYTGLSLPIQTQNFCKVIVLDQPPGKGPLEFDWRRLNKVTSVKNQGMCGACWAFATLASLESQFAIKHNQLINLSEQQMIDCDFVDAGCNGGLLHTAFEAIIKMGGVQLESDYPYEADNNNCRMNTNKFLVQVKDCYRYITVYEEKLKDLLRLVGPIPMAIDAADIVNYKQGIIKYCFNSGLNHAVLLVGYGVENNIPYWTFKNTWGTDWGEEGFFRVQQNINACGMRNELASTAVIY.

The N-terminal stretch at methionine 1–serine 16 is a signal peptide. The propeptide at alanine 17–glycine 112 is activation peptide. 3 disulfide bridges follow: cysteine 133/cysteine 174, cysteine 167/cysteine 207, and cysteine 262/cysteine 310. The active site involves cysteine 136. A glycan (N-linked (GlcNAc...) asparagine; by host) is linked at asparagine 158. Active-site residues include histidine 269 and asparagine 289.

It belongs to the peptidase C1 family. Post-translationally, synthesized as an inactive proenzyme and activated by proteolytic removal of the inhibitory propeptide.

It catalyses the reaction Endopeptidase of broad specificity, hydrolyzing substrates of both cathepsin L and cathepsin B.. Its function is as follows. Cysteine protease that plays an essential role in host liquefaction to facilitate horizontal transmission of the virus. May participate in the degradation of foreign protein expressed by the baculovirus system. In Helicoverpa zea (Corn earworm moth), this protein is Viral cathepsin (VCATH).